The following is a 573-amino-acid chain: MTSQGPLYIGFDLSTQQLKGLVVNSELKVVHISKFDFDADSHGFSIKKGVLTNEAEHEVFAPVALWLQALDGVLNGLRKQGLDFSRVKGISGAGQQHGSVYWGENAESLLKSLDSSKSLEEQLSGAFSHPFSPNWQDASTQKECDEFDAFLGGPEQLAEATGSKAHHRFTGPQILRMQRKYPEVYKKTARISLVSSFLASLLLGHIAPMDISDVCGMNLWDIKKGAYNEKLLGLCAGPFGVEDLKRKLGAVPEDGGLRLGKINRYFVERYGFSSDCEILPSTGDNPATILALPLRPSDAMVSLGTSTTFLMSTPNYKPDPATHFFNHPTTPGLYMFMLCYKNGGLAREHVRDAINEKSGSGASQSWESFDKIMLETPPMGQKTESGPMKMGLFFPRPEIVPNVRSGQWRFTYDPASDALTETEDGWNTPSDEARAIVESQMLSLRLRSRGLTQSPGDGLPPQPRRVYLVGGGSKNKAIAKVAGEILGGSDGVYKLDVGDNACALGAAYKAVWAIERKPGQTFEDLIGQRWREEEFIEKIADGYQKGVFEKYGKAVEGFEKMEQQVLKQEAARK.

H97, R168, D284, and N285 together coordinate substrate. ATP contacts are provided by residues W366, 471–472 (GG), and N475.

The protein belongs to the FGGY kinase family.

The protein localises to the cytoplasm. It catalyses the reaction D-xylulose + ATP = D-xylulose 5-phosphate + ADP + H(+). Highly specific D-xylulose kinase which participates in the catabolism of xylose. Xylose is a major component of hemicelluloses such as xylan. Most fungi utilize D-xylose via three enzymatic reactions, xylose reductase (XR), xylitol dehydrogenase (XDH), and xylulokinase, to form xylulose 5-phosphate, which enters pentose phosphate pathway. The sequence is that of Probable D-xylulose kinase A (xkiA) from Aspergillus fumigatus (strain ATCC MYA-4609 / CBS 101355 / FGSC A1100 / Af293) (Neosartorya fumigata).